The primary structure comprises 131 residues: Large ribosomal subunit protein mL60 (131 aa).

Residues 1-12 constitute a mitochondrion transit peptide; sequence MFGPFKLTSPVA.

It belongs to the mitochondrion-specific ribosomal protein mL60 family. In terms of assembly, component of the mitochondrial large ribosomal subunit (mt-LSU). Mature yeast 74S mitochondrial ribosomes consist of a small (37S) and a large (54S) subunit. The 37S small subunit contains a 15S ribosomal RNA (15S mt-rRNA) and 34 different proteins. The 54S large subunit contains a 21S rRNA (21S mt-rRNA) and 46 different proteins.

It is found in the mitochondrion. Its function is as follows. Component of the mitochondrial ribosome (mitoribosome), a dedicated translation machinery responsible for the synthesis of mitochondrial genome-encoded proteins, including at least some of the essential transmembrane subunits of the mitochondrial respiratory chain. The mitoribosomes are attached to the mitochondrial inner membrane and translation products are cotranslationally integrated into the membrane. This chain is Large ribosomal subunit protein mL60 (MRPL31), found in Saccharomyces cerevisiae (strain ATCC 204508 / S288c) (Baker's yeast).